A 155-amino-acid polypeptide reads, in one-letter code: Endoribonuclease YbeY (155 aa).

The Zn(2+) site is built by histidine 114, histidine 118, and histidine 124.

The protein belongs to the endoribonuclease YbeY family. Zn(2+) is required as a cofactor.

The protein localises to the cytoplasm. Its function is as follows. Single strand-specific metallo-endoribonuclease involved in late-stage 70S ribosome quality control and in maturation of the 3' terminus of the 16S rRNA. In Erwinia tasmaniensis (strain DSM 17950 / CFBP 7177 / CIP 109463 / NCPPB 4357 / Et1/99), this protein is Endoribonuclease YbeY.